The following is a 152-amino-acid chain: Ribosome maturation factor RimP (152 aa).

It belongs to the RimP family.

The protein resides in the cytoplasm. Required for maturation of 30S ribosomal subunits. The chain is Ribosome maturation factor RimP from Brevibacillus brevis (strain 47 / JCM 6285 / NBRC 100599).